A 369-amino-acid chain; its full sequence is Cytoplasmic tRNA 2-thiolation protein 1 (369 aa).

This sequence belongs to the TtcA family. CTU1/NCS6/ATPBD3 subfamily.

Its subcellular location is the cytoplasm. It functions in the pathway tRNA modification; 5-methoxycarbonylmethyl-2-thiouridine-tRNA biosynthesis. Functionally, plays a central role in 2-thiolation of mcm(5)S(2)U at tRNA wobble positions of tRNA(Lys), tRNA(Glu) and tRNA(Gln). Directly binds tRNAs and probably acts by catalyzing adenylation of tRNAs, an intermediate required for 2-thiolation. It is unclear whether it acts as a sulfurtransferase that transfers sulfur from thiocarboxylated URM1 onto the uridine of tRNAs at wobble position. Prior mcm(5) tRNA modification by the elongator complex is required for 2-thiolation. May also be involved in protein urmylation. The polypeptide is Cytoplasmic tRNA 2-thiolation protein 1 (Meyerozyma guilliermondii (strain ATCC 6260 / CBS 566 / DSM 6381 / JCM 1539 / NBRC 10279 / NRRL Y-324) (Yeast)).